Here is a 277-residue protein sequence, read N- to C-terminus: RsbT co-antagonist protein RsbRB (277 aa).

Positions 165-276 (SSPVITLSKS…TNLAQALNYH (112 aa)) constitute an STAS domain. Residue Thr186 is modified to Phosphothreonine.

Interacts with RsbRA and RsbS in the stressosome. The stressosome probably also contains RsbRC and RsbRD. Post-translationally, phosphorylated by RsbT.

In terms of biological role, one of 4 functionally non-identical RsbR paralogs, it functions in the environmental signaling branch of the general stress response. Functionally, negative regulator of sigma-B activity. Non-phosphorylated RsbS binds to RsbT, preventing its association with RsbU. Requires any one of RsbRA, RsbRB, RsbRC or RsbRD to sequester RsbT. When RsbS and the RsbR paralog(s) are phosphorylated, they release RsbT, which can then bind and activate RsbU. The polypeptide is RsbT co-antagonist protein RsbRB (rsbRB) (Bacillus subtilis (strain 168)).